The sequence spans 171 residues: Translation initiation factor IF-3 (171 aa).

Belongs to the IF-3 family. Monomer.

The protein localises to the cytoplasm. Its function is as follows. IF-3 binds to the 30S ribosomal subunit and shifts the equilibrium between 70S ribosomes and their 50S and 30S subunits in favor of the free subunits, thus enhancing the availability of 30S subunits on which protein synthesis initiation begins. This is Translation initiation factor IF-3 from Listeria innocua serovar 6a (strain ATCC BAA-680 / CLIP 11262).